Consider the following 161-residue polypeptide: MKKKYYISISLLMTIIVLVFDQVSKWLITISMKVGDSYEIIPNFLNITSHRNNGAAWGILSGKMLFFYIITIIILIVLVIFYIKEAQFNLFMQVAISLLFAGALGNFIDRVLHGEVVDFIDTNIFGYDFPIFNIADSSLTIGVIFVIIALIKDAIINKKEV.

Transmembrane regions (helical) follow at residues 9–29 (ISLL…WLIT), 63–83 (KMLF…IFYI), and 88–108 (FNLF…GNFI). Active-site residues include Asp118 and Asp136. The helical transmembrane segment at 131–151 (IFNIADSSLTIGVIFVIIALI) threads the bilayer.

The protein belongs to the peptidase A8 family.

It localises to the cell membrane. The enzyme catalyses Release of signal peptides from bacterial membrane prolipoproteins. Hydrolyzes -Xaa-Yaa-Zaa-|-(S,diacylglyceryl)Cys-, in which Xaa is hydrophobic (preferably Leu), and Yaa (Ala or Ser) and Zaa (Gly or Ala) have small, neutral side chains.. It functions in the pathway protein modification; lipoprotein biosynthesis (signal peptide cleavage). Functionally, this protein specifically catalyzes the removal of signal peptides from prolipoproteins. The polypeptide is Lipoprotein signal peptidase (Staphylococcus epidermidis (strain ATCC 12228 / FDA PCI 1200)).